The primary structure comprises 377 residues: Nitric oxide reductase FlRd-NAD(+) reductase (377 aa).

It belongs to the FAD-dependent oxidoreductase family. FAD serves as cofactor.

It is found in the cytoplasm. It carries out the reaction 2 reduced [nitric oxide reductase rubredoxin domain] + NAD(+) + H(+) = 2 oxidized [nitric oxide reductase rubredoxin domain] + NADH. Its pathway is nitrogen metabolism; nitric oxide reduction. One of at least two accessory proteins for anaerobic nitric oxide (NO) reductase. Reduces the rubredoxin moiety of NO reductase. The chain is Nitric oxide reductase FlRd-NAD(+) reductase from Escherichia coli O7:K1 (strain IAI39 / ExPEC).